The following is a 946-amino-acid chain: Inhibin beta chain (946 aa).

2 disordered regions span residues 115–142 (VADRSQASSRTVHVSVPTTPNETPSSTS) and 174–194 (KSRNRKRQRRRRRRRNHRRRR). The span at 128–142 (VSVPTTPNETPSSTS) shows a compositional bias: low complexity. Asn-208, Asn-217, Asn-271, and Asn-389 each carry an N-linked (GlcNAc...) asparagine glycan. Residues 436–462 (SPGSHLFNGRGGRTDQRSERDPSHHKY) are disordered. Basic and acidic residues predominate over residues 447–459 (GRTDQRSERDPSH). 7 N-linked (GlcNAc...) asparagine glycosylation sites follow: Asn-471, Asn-484, Asn-542, Asn-561, Asn-566, Asn-732, and Asn-804. 4 disulfides stabilise this stretch: Cys-837/Cys-846, Cys-845/Cys-912, Cys-874/Cys-943, and Cys-878/Cys-945.

Belongs to the TGF-beta family. As to quaternary structure, homodimer or heterodimer; disulfide-linked. Cleaved in vitro by metalloproteases tok and tld to produce a 30 kDa product. In terms of tissue distribution, widely expressed in larval brains.

Its subcellular location is the secreted. Its function is as follows. Controls several aspects of neuronal morphogenesis; essential for optic lobe development, EcR-B1 expression in larval brains, mushroom body remodeling, dorsal neuron morphogenesis and motoneuron axon guidance. Ligands Actbeta and daw act redundantly through the Activin receptor Babo and its transcriptional mediator Smad2 (Smox), to regulate neuroblast numbers and proliferation rates in the developing larval brain. The sequence is that of Inhibin beta chain (Actbeta) from Drosophila melanogaster (Fruit fly).